The sequence spans 197 residues: Imidazoleglycerol-phosphate dehydratase (197 aa).

It belongs to the imidazoleglycerol-phosphate dehydratase family.

The protein resides in the cytoplasm. It carries out the reaction D-erythro-1-(imidazol-4-yl)glycerol 3-phosphate = 3-(imidazol-4-yl)-2-oxopropyl phosphate + H2O. It functions in the pathway amino-acid biosynthesis; L-histidine biosynthesis; L-histidine from 5-phospho-alpha-D-ribose 1-diphosphate: step 6/9. This Pseudomonas syringae pv. syringae (strain B728a) protein is Imidazoleglycerol-phosphate dehydratase.